A 121-amino-acid polypeptide reads, in one-letter code: NADH-quinone oxidoreductase subunit A 1 (121 aa).

Helical transmembrane passes span 6–26 (FPIF…LSIG), 62–82 (LVAM…PWAV), and 90–110 (FYGL…YYYI).

Belongs to the complex I subunit 3 family. NDH-1 is composed of 14 different subunits. Subunits NuoA, H, J, K, L, M, N constitute the membrane sector of the complex.

It is found in the cell inner membrane. It catalyses the reaction a quinone + NADH + 5 H(+)(in) = a quinol + NAD(+) + 4 H(+)(out). In terms of biological role, NDH-1 shuttles electrons from NADH, via FMN and iron-sulfur (Fe-S) centers, to quinones in the respiratory chain. The immediate electron acceptor for the enzyme in this species is believed to be a menaquinone. Couples the redox reaction to proton translocation (for every two electrons transferred, four hydrogen ions are translocated across the cytoplasmic membrane), and thus conserves the redox energy in a proton gradient. This Chloroherpeton thalassium (strain ATCC 35110 / GB-78) protein is NADH-quinone oxidoreductase subunit A 1.